We begin with the raw amino-acid sequence, 432 residues long: D-amino acid dehydrogenase 1 (432 aa).

An FAD-binding site is contributed by 3-17 (VLVLGSGVIGTASAY). The tract at residues 410–432 (GLDISRYSNSPENAKNAHPAPAH) is disordered.

The protein belongs to the DadA oxidoreductase family. FAD is required as a cofactor.

It carries out the reaction a D-alpha-amino acid + A + H2O = a 2-oxocarboxylate + AH2 + NH4(+). It functions in the pathway amino-acid degradation; D-alanine degradation; NH(3) and pyruvate from D-alanine: step 1/1. In terms of biological role, catalyzes the oxidative deamination of D-amino acids. Has very broad substrate specificity; all the D-amino acids tested can be used as the substrate except D-Glu and D-Gln. Participates in the utilization of several D-amino acids as the sole source of nitrogen, i.e. D-alanine, D-histidine, D-phenylalanine, D-serine, D-threonine, and D-valine. The chain is D-amino acid dehydrogenase 1 (dadA1) from Pseudomonas aeruginosa (strain ATCC 15692 / DSM 22644 / CIP 104116 / JCM 14847 / LMG 12228 / 1C / PRS 101 / PAO1).